A 238-amino-acid chain; its full sequence is MKPEQFVHALKEKGINLSEKQTEQFYIYFQELVEWNQKVNLTAITDQEEVYVKHFYDCVTAAFYHDFNQEISICDIGAGAGFPSIPLKIVFPQLKITIVDSLKKRITFLNHLATKLELSNVAFYHDRAENFGKNKTFRESFDIVTARAVARMSVLSELCLPLVKKNGVFIAMKGAQAKEELEVGKPAIELLGGEVEEIHTFSLPIEESERSIILISKKRQTPKKYPRKAGLPNKEPIE.

Residues glycine 77, phenylalanine 82, 128-129 (AE), and arginine 147 contribute to the S-adenosyl-L-methionine site. The interval 219–238 (RQTPKKYPRKAGLPNKEPIE) is disordered.

This sequence belongs to the methyltransferase superfamily. RNA methyltransferase RsmG family.

The protein resides in the cytoplasm. Functionally, specifically methylates the N7 position of guanine in position 535 of 16S rRNA. This Oceanobacillus iheyensis (strain DSM 14371 / CIP 107618 / JCM 11309 / KCTC 3954 / HTE831) protein is Ribosomal RNA small subunit methyltransferase G.